The primary structure comprises 564 residues: Beta-catenin-like protein 1 homolog (564 aa).

The tract at residues 1-56 is disordered; the sequence is MDVDSIFKNTEETNKKRNPEEADSLEPASSRRRLAEENSDEENEEFDEEGGRFFGS. Over residues 9–20 the composition is skewed to basic and acidic residues; that stretch reads NTEETNKKRNPE. Residues 37–48 show a composition bias toward acidic residues; it reads ENSDEENEEFDE. A Phosphoserine modification is found at S39. 2 HEAT repeats span residues 83-133 and 138-177; these read PTEL…VLSE and IPIF…DEDV. ARM repeat units lie at residues 179–229, 230–276, 277–326, 328–366, and 367–411; these read PDAL…LLSV, DNSI…LANS, KEAK…LVQE, KGKS…LLFG, and PLST…LFRS. A coiled-coil region spans residues 465 to 528; it reads EKSTKWFLQQ…DALKNYHENL (64 aa).

Its subcellular location is the nucleus. Functionally, probable spliceosomal component involved in the activation of pre-mRNA splicing. This Schizosaccharomyces pombe (strain 972 / ATCC 24843) (Fission yeast) protein is Beta-catenin-like protein 1 homolog (ctnnbl1).